The primary structure comprises 860 residues: Leucine--tRNA ligase (860 aa).

The 'HIGH' region signature appears at 42–52 (PYPSGRLHMGH). Positions 619 to 623 (KMSKS) match the 'KMSKS' region motif. Residue Lys-622 coordinates ATP.

It belongs to the class-I aminoacyl-tRNA synthetase family.

It is found in the cytoplasm. The catalysed reaction is tRNA(Leu) + L-leucine + ATP = L-leucyl-tRNA(Leu) + AMP + diphosphate. This is Leucine--tRNA ligase from Shigella boydii serotype 18 (strain CDC 3083-94 / BS512).